Consider the following 84-residue polypeptide: Small ribosomal subunit protein bS16 (84 aa).

It belongs to the bacterial ribosomal protein bS16 family.

The sequence is that of Small ribosomal subunit protein bS16 from Koribacter versatilis (strain Ellin345).